A 142-amino-acid chain; its full sequence is Large ribosomal subunit protein uL13 (142 aa).

It belongs to the universal ribosomal protein uL13 family. As to quaternary structure, part of the 50S ribosomal subunit.

Its function is as follows. This protein is one of the early assembly proteins of the 50S ribosomal subunit, although it is not seen to bind rRNA by itself. It is important during the early stages of 50S assembly. The protein is Large ribosomal subunit protein uL13 of Ruthia magnifica subsp. Calyptogena magnifica.